Consider the following 249-residue polypeptide: Dof zinc finger protein DOF4.5 (249 aa).

The segment at 25–79 (RVCARCDSDNTKFCYYNNYCEFQPRYFCKNCRRYWTHGGALRNIPIGGSSRAKRA) adopts a Dof-type zinc-finger fold. The Zn(2+) site is built by Cys-27, Cys-30, Cys-52, and Cys-55.

It localises to the nucleus. Its function is as follows. Transcription factor that binds specifically to a 5'-AA[AG]G-3' consensus core sequence. The protein is Dof zinc finger protein DOF4.5 (DOF4.5) of Arabidopsis thaliana (Mouse-ear cress).